The following is a 282-amino-acid chain: HTH-type transcriptional activator RhaR (282 aa).

The 99-residue stretch at 179 to 277 (DKLITALANS…GMTPSQWRHL (99 aa)) folds into the HTH araC/xylS-type domain. 2 DNA-binding regions (H-T-H motif) span residues 196-217 (DAFC…RAQT) and 244-267 (ISEI…TRET).

Binds DNA as a dimer.

Its subcellular location is the cytoplasm. Its function is as follows. Activates expression of the rhaSR operon in response to L-rhamnose. The protein is HTH-type transcriptional activator RhaR of Salmonella typhimurium (strain LT2 / SGSC1412 / ATCC 700720).